The following is a 114-amino-acid chain: Superoxide dismutase [Cu-Zn] (114 aa).

Residues His37, His39, and His54 each coordinate Cu cation. Zn(2+) is bound by residues His54, His62, His71, and Asp74. The tract at residues 54-80 is disordered; it reads HFNPGNKEHGAPTDGNRHLGDLGNIQA. Positions 59–73 are enriched in basic and acidic residues; that stretch reads NKEHGAPTDGNRHLG. Cu cation is bound at residue His111.

The protein belongs to the Cu-Zn superoxide dismutase family. Homodimer. It depends on Cu cation as a cofactor. Requires Zn(2+) as cofactor.

The protein localises to the cytoplasm. It catalyses the reaction 2 superoxide + 2 H(+) = H2O2 + O2. Its function is as follows. Destroys radicals which are normally produced within the cells and which are toxic to biological systems. The chain is Superoxide dismutase [Cu-Zn] from Drosophila tolteca (Fruit fly).